The sequence spans 188 residues: Elongation factor P-like protein (188 aa).

The protein belongs to the elongation factor P family.

This chain is Elongation factor P-like protein, found in Vibrio parahaemolyticus serotype O3:K6 (strain RIMD 2210633).